Reading from the N-terminus, the 106-residue chain is TYVIAEPCVDVKDKACIEECPVDCIYEGARMLYIHPDECVDCGACEPVCPVEAIYYEDDVPDQWSSYAQANADFFAELGSPGGASKVGQTDNDPQAIKDLPPQGED.

The [3Fe-4S] cluster site is built by C8 and C16. [4Fe-4S] cluster-binding residues include C20, C39, C42, and C45. In terms of domain architecture, 4Fe-4S ferredoxin-type spans 30 to 59 (RMLYIHPDECVDCGACEPVCPVEAIYYEDD). C49 is a [3Fe-4S] cluster binding site. Residues 81-106 (PGGASKVGQTDNDPQAIKDLPPQGED) form a disordered region.

[4Fe-4S] cluster is required as a cofactor. It depends on [3Fe-4S] cluster as a cofactor.

In terms of biological role, ferredoxins are iron-sulfur proteins that transfer electrons in a wide variety of metabolic reactions. This Mycolicibacterium smegmatis (Mycobacterium smegmatis) protein is Ferredoxin (fdxA).